A 503-amino-acid chain; its full sequence is Pre-glycoprotein polyprotein GP complex (503 aa).

G2 is lipidated: N-myristoyl glycine; by host. Over 2–17 (GQIVTLIQSIPEVLQE) the chain is Extracellular. Residues 18–33 (VFNVALIIVSVLCIVK) traverse the membrane as a helical segment. The Cytoplasmic segment spans residues 34-58 (GFVNLMRCGLFQLVTFLILSGRSCD). C57 provides a ligand contact to Zn(2+). Residues 59–446 (SMMIDRRHNL…QGKTPLALTD (388 aa)) are Extracellular-facing. 4 cysteine pairs are disulfide-bonded: C86-C248, C293-C306, C315-C324, and C378-C399. 4 N-linked (GlcNAc...) asparagine; by host glycosylation sites follow: N89, N111, N181, and N241. N-linked (GlcNAc...) asparagine; by host glycans are attached at residues N379, N387, N404, and N409. A helical membrane pass occupies residues 447–467 (ICFWSLVFYTITVFLHIVGIP). Over 468–503 (THRHIIGDGCPKPHRITRNSLCSCGYYKYQRNLTNG) the chain is Cytoplasmic. Zn(2+) contacts are provided by H469, H471, C477, H481, C489, and C491.

This sequence belongs to the arenaviridae GPC protein family. Interacts with glycoprotein G2. Part of the GP complex (GP-C) together with glycoprotein G1 and glycoprotein G2. The GP-complex interacts with protein Z, which interacts with ribonucleocapsid; these interactions may induce virion budding. As to quaternary structure, homotrimer; disulfide-linked. In pre-fusion state, G1 homotrimers bind G2 homotrimers via ionic interactions. Part of the GP complex (GP-C) together with glycoprotein G2 and the stable signal peptide. The GP-complex interacts with protein Z, which interacts with ribonucleocapsid; these interactions may induce virion budding. In terms of assembly, homotrimer. Interacts with the stable signal peptide. In pre-fusion state, G2 homotrimers bind G1 homotrimers via ionic interactions. Part of the GP complex (GP-C) together with glycoprotein G1 and the stable signal peptide. Acidification in the endosome triggers rearrangements, which ultimately leads to a 6 helix bundle formed by the two heptad repeat domains (HR1 and HR2) in post-fusion state. The GP-complex interacts with protein Z, which interacts with ribonucleocapsid; these interactions may induce virion budding. Specific enzymatic cleavages in vivo yield mature proteins. GP-C polyprotein is cleaved in the endoplasmic reticulum by the host protease MBTPS1. Only cleaved glycoprotein is incorporated into virions. In terms of processing, the SSP remains stably associated with the GP complex following cleavage by signal peptidase and plays crucial roles in the trafficking of GP through the secretory pathway. Post-translationally, myristoylation is necessary for GP2-mediated fusion activity.

The protein resides in the virion membrane. Its subcellular location is the host endoplasmic reticulum membrane. It is found in the host Golgi apparatus membrane. The protein localises to the host cell membrane. Its function is as follows. Functions as a cleaved signal peptide that is retained as the third component of the GP complex (GP-C). Helps to stabilize the spike complex in its native conformation. The SSP is required for efficient glycoprotein expression, post-translational maturation cleavage of G1 and G2, glycoprotein transport to the cell surface plasma membrane, formation of infectious virus particles, and acid pH-dependent glycoprotein-mediated cell fusion. Forms the virion spikes together with glycoprotein G2. The glycoprotein spike trimers are connected to the underlying matrix. Interacts with the host receptor leading to virus endocytosis. In terms of biological role, forms the virion spikes together with glycoprotein G1. The glycoprotein spike trimers are connected to the underlying matrix. Class I viral fusion protein that directs fusion of viral and host endosomal membranes, leading to delivery of the nucleocapsid into the cytoplasm. Membrane fusion is mediated by irreversible conformational changes induced by acidification. The chain is Pre-glycoprotein polyprotein GP complex from Cavia cutleri (Guinea pig).